Consider the following 236-residue polypeptide: Small ribosomal subunit protein uS2c (236 aa).

Belongs to the universal ribosomal protein uS2 family.

It is found in the plastid. It localises to the chloroplast. The polypeptide is Small ribosomal subunit protein uS2c (rps2) (Oryza nivara (Indian wild rice)).